The chain runs to 61 residues: SPbeta prophage-derived uncharacterized protein YotK (61 aa).

The stretch at 7–57 forms a coiled coil; it reads SIQTLLNKMDRQMKTVKEAIEEKDLQRAHRNLINLADNNEELMQEIRWVKK.

The chain is SPbeta prophage-derived uncharacterized protein YotK (yotK) from Bacillus subtilis (strain 168).